Consider the following 235-residue polypeptide: 7-cyano-7-deazaguanine synthase (235 aa).

An ATP-binding site is contributed by 11–21 (FSGGQDSTTCV). Residues cysteine 199, cysteine 214, cysteine 217, and cysteine 220 each coordinate Zn(2+).

Belongs to the QueC family. The cofactor is Zn(2+).

The enzyme catalyses 7-carboxy-7-deazaguanine + NH4(+) + ATP = 7-cyano-7-deazaguanine + ADP + phosphate + H2O + H(+). The protein operates within purine metabolism; 7-cyano-7-deazaguanine biosynthesis. Its function is as follows. Catalyzes the ATP-dependent conversion of 7-carboxy-7-deazaguanine (CDG) to 7-cyano-7-deazaguanine (preQ(0)). The sequence is that of 7-cyano-7-deazaguanine synthase from Janthinobacterium sp. (strain Marseille) (Minibacterium massiliensis).